The primary structure comprises 344 residues: L-rhamnose-proton symporter (344 aa).

The next 10 membrane-spanning stretches (helical) occupy residues 4–24 (AITM…CFYA), 38–58 (WSVG…ALLL), 68–88 (FNLS…IGNI), 101–121 (MGIG…TPII), 137–157 (TLLG…AGQL), 175–195 (LLLA…MNAA), 214–234 (LPSY…FCFI), 259–279 (ILLS…YAWG), 290–310 (MSWM…GLVL), and 321–341 (VAVL…VGLG).

This sequence belongs to the L-rhamnose transporter (TC 2.A.7.6) family.

The protein localises to the cell inner membrane. It carries out the reaction L-rhamnopyranose(in) + H(+)(in) = L-rhamnopyranose(out) + H(+)(out). In terms of biological role, uptake of L-rhamnose across the cytoplasmic membrane with the concomitant transport of protons into the cell (symport system). The sequence is that of L-rhamnose-proton symporter from Salmonella paratyphi A (strain ATCC 9150 / SARB42).